The sequence spans 349 residues: tRNA-specific 2-thiouridylase MnmA (349 aa).

ATP contacts are provided by residues 7 to 14 (GLSGGVDS) and leucine 33. Cysteine 94 acts as the Nucleophile in catalysis. Cysteine 94 and cysteine 193 are joined by a disulfide. Residue glycine 119 coordinates ATP. Residues 143–145 (KDQ) form an interaction with tRNA region. Cysteine 193 acts as the Cysteine persulfide intermediate in catalysis. The tract at residues 298–299 (RY) is interaction with tRNA.

This sequence belongs to the MnmA/TRMU family.

The protein localises to the cytoplasm. It carries out the reaction S-sulfanyl-L-cysteinyl-[protein] + uridine(34) in tRNA + AH2 + ATP = 2-thiouridine(34) in tRNA + L-cysteinyl-[protein] + A + AMP + diphosphate + H(+). In terms of biological role, catalyzes the 2-thiolation of uridine at the wobble position (U34) of tRNA, leading to the formation of s(2)U34. The protein is tRNA-specific 2-thiouridylase MnmA of Rippkaea orientalis (strain PCC 8801 / RF-1) (Cyanothece sp. (strain PCC 8801)).